The chain runs to 61 residues: Small ribosomal subunit protein uS14B (61 aa).

Zn(2+)-binding residues include cysteine 24, cysteine 27, cysteine 40, and cysteine 43.

The protein belongs to the universal ribosomal protein uS14 family. Zinc-binding uS14 subfamily. In terms of assembly, part of the 30S ribosomal subunit. Contacts proteins S3 and S10. The cofactor is Zn(2+).

In terms of biological role, binds 16S rRNA, required for the assembly of 30S particles and may also be responsible for determining the conformation of the 16S rRNA at the A site. The polypeptide is Small ribosomal subunit protein uS14B (Streptomyces avermitilis (strain ATCC 31267 / DSM 46492 / JCM 5070 / NBRC 14893 / NCIMB 12804 / NRRL 8165 / MA-4680)).